The sequence spans 184 residues: Large ribosomal subunit protein uL5c (184 aa).

Belongs to the universal ribosomal protein uL5 family. In terms of assembly, part of the 50S ribosomal subunit; contacts the 5S rRNA.

The protein resides in the plastid. It localises to the chloroplast. Binds 5S rRNA, forms part of the central protuberance of the 50S subunit. This is Large ribosomal subunit protein uL5c (rpl5) from Nephroselmis olivacea (Green alga).